Reading from the N-terminus, the 397-residue chain is Phosphoglycerate kinase (397 aa).

Residues 21-23, arginine 36, 59-62, arginine 119, and arginine 152 each bind substrate; these read DVN and HFGR. ATP-binding positions include lysine 202, glutamate 324, and 354-357; that span reads GGDT.

The protein belongs to the phosphoglycerate kinase family. In terms of assembly, monomer.

It localises to the cytoplasm. The catalysed reaction is (2R)-3-phosphoglycerate + ATP = (2R)-3-phospho-glyceroyl phosphate + ADP. The protein operates within carbohydrate degradation; glycolysis; pyruvate from D-glyceraldehyde 3-phosphate: step 2/5. The polypeptide is Phosphoglycerate kinase (Cereibacter sphaeroides (strain ATCC 17025 / ATH 2.4.3) (Rhodobacter sphaeroides)).